Consider the following 588-residue polypeptide: Aspartate--tRNA ligase (588 aa).

E172 contributes to the L-aspartate binding site. An aspartate region spans residues 196–199 (QLFK). An L-aspartate-binding site is contributed by R218. ATP contacts are provided by residues 218 to 220 (RDE) and Q227. L-aspartate is bound at residue H449. E483 provides a ligand contact to ATP. Position 490 (R490) interacts with L-aspartate. Residue 535–538 (GLDR) coordinates ATP.

It belongs to the class-II aminoacyl-tRNA synthetase family. Type 1 subfamily. As to quaternary structure, homodimer.

The protein resides in the cytoplasm. It carries out the reaction tRNA(Asp) + L-aspartate + ATP = L-aspartyl-tRNA(Asp) + AMP + diphosphate. Functionally, catalyzes the attachment of L-aspartate to tRNA(Asp) in a two-step reaction: L-aspartate is first activated by ATP to form Asp-AMP and then transferred to the acceptor end of tRNA(Asp). This Histophilus somni (strain 2336) (Haemophilus somnus) protein is Aspartate--tRNA ligase.